A 424-amino-acid polypeptide reads, in one-letter code: UDP-N-acetylglucosamine 1-carboxyvinyltransferase (424 aa).

A phosphoenolpyruvate-binding site is contributed by 22 to 23 (KN). R93 lines the UDP-N-acetyl-alpha-D-glucosamine pocket. The active-site Proton donor is the C117. Residue C117 is modified to 2-(S-cysteinyl)pyruvic acid O-phosphothioketal. UDP-N-acetyl-alpha-D-glucosamine-binding positions include 162–165 (KVSV), D307, and I329.

The protein belongs to the EPSP synthase family. MurA subfamily.

Its subcellular location is the cytoplasm. The catalysed reaction is phosphoenolpyruvate + UDP-N-acetyl-alpha-D-glucosamine = UDP-N-acetyl-3-O-(1-carboxyvinyl)-alpha-D-glucosamine + phosphate. It participates in cell wall biogenesis; peptidoglycan biosynthesis. Functionally, cell wall formation. Adds enolpyruvyl to UDP-N-acetylglucosamine. The chain is UDP-N-acetylglucosamine 1-carboxyvinyltransferase from Actinobacillus pleuropneumoniae serotype 3 (strain JL03).